A 197-amino-acid chain; its full sequence is dCTP deaminase (197 aa).

105–110 serves as a coordination point for dCTP; sequence RSSIAR. Catalysis depends on E133, which acts as the Proton donor/acceptor. DCTP-binding residues include Y166 and Q177. The disordered stretch occupies residues 172 to 197; sequence NKYAGQKDPKPSRLAEELSLEQLRGR. Residues 176 to 187 show a composition bias toward basic and acidic residues; that stretch reads GQKDPKPSRLAE.

This sequence belongs to the dCTP deaminase family. As to quaternary structure, homotrimer.

It carries out the reaction dCTP + H2O + H(+) = dUTP + NH4(+). Its pathway is pyrimidine metabolism; dUMP biosynthesis; dUMP from dCTP (dUTP route): step 1/2. Its function is as follows. Catalyzes the deamination of dCTP to dUTP. This Thermomicrobium roseum (strain ATCC 27502 / DSM 5159 / P-2) protein is dCTP deaminase.